The primary structure comprises 391 residues: Extracellular metalloproteinase 3 (391 aa).

Residues 1–9 (HNVVDYVAS) constitute a propeptide that is removed on maturation. N173 is a glycosylation site (N-linked (GlcNAc...) asparagine). H192 is a binding site for Zn(2+). The active site involves E193. Residue H196 participates in Zn(2+) binding. N243 and N385 each carry an N-linked (GlcNAc...) asparagine glycan.

This sequence belongs to the peptidase M36 family. Zn(2+) serves as cofactor.

The protein resides in the secreted. Functionally, secreted metalloproteinase probably acting as a virulence factor. This chain is Extracellular metalloproteinase 3 (MEP3), found in Trichophyton soudanense.